Reading from the N-terminus, the 68-residue chain is Ribosome modulation factor (68 aa).

Belongs to the ribosome modulation factor family.

The protein resides in the cytoplasm. During stationary phase, converts 70S ribosomes to an inactive dimeric form (100S ribosomes). This chain is Ribosome modulation factor, found in Alcanivorax borkumensis (strain ATCC 700651 / DSM 11573 / NCIMB 13689 / SK2).